The chain runs to 425 residues: MSTIEAIYLVDTNGALLLQLESRGRTSPITLEHIKNELFRYKLRNEEPPFILHNKNFLIFQELEEDVRLCIPTTCDTEPLYIHDIMRRIVDVVKTFFGGFNASKVEKNVCVIVQLLAEMIDYGYATCMEPNALQDIVPLPSFMNKFMAVTGLQTNTPTLARDTVPWRTAKAKYATNEFFIHVLERVSAVYQPNGKLAFGTVKSDMECKCQISGMPLLLLSLRPGTKLGNVRFHQSVNLKRWKQHPDQIEFIPPDGKFTLASFQTDFATQKSLPVVVEAKNKLDGRFEVRIRNTGKKSVENLKILITIPQALKSVTVTEGNYIFRASKYTHMEEGILEWSVKKLAWTSPALVLTGFLAPLKKDANSTEESSSYSKLEHLDLQYKLQGSTLHNFKVESLKMLNHPDKKSYKGVKHTIIAQNVSFRFR.

The region spanning 175-423 is the MHD domain; the sequence is TNEFFIHVLE…TIIAQNVSFR (249 aa).

It belongs to the adaptor complexes medium subunit family.

It is found in the cytoplasm. The protein resides in the cytoskeleton. It localises to the microtubule organizing center. Its subcellular location is the spindle pole body. The protein localises to the membrane. It is found in the golgi apparatus. The protein resides in the cytoplasmic vesicle membrane. Functionally, part of the AP-3 complex, an adaptor-related complex which is not clathrin-associated. The complex is associated with the Golgi region as well as more peripheral structures. It facilitates the budding of vesicles from the Golgi membrane and may be directly involved in trafficking to the vacuole. The protein is AP-3 complex subunit mu (apm3) of Schizosaccharomyces pombe (strain 972 / ATCC 24843) (Fission yeast).